A 217-amino-acid chain; its full sequence is Trimethylamine corrinoid protein (217 aa).

The region spanning 1-92 is the B12-binding N-terminal domain; sequence MANKEEIIAK…EMEKRKSQTK (92 aa). The 124-residue stretch at 94-217 folds into the B12-binding domain; sequence LGTVAIGTIE…VAKVKAALNV (124 aa). Histidine 107 serves as a coordination point for methylcob(III)alamin.

This sequence belongs to the methylamine corrinoid protein family. In terms of assembly, can form a complex with MttB.

It functions in the pathway one-carbon metabolism; methanogenesis from trimethylamine. Acts probably as a methyl group carrier between MttB and either MtbA or MtaA. This chain is Trimethylamine corrinoid protein, found in Methanosarcina barkeri.